The chain runs to 113 residues: MSEVNVPLSFSDAAAKRVKALIAEEENPSLMLRVYITGGGCSGFQYGFTFDETVNEGDTKIENSGVILVVDPMSLQYLIGGVVDYTEGLEGSRFFVNNPNATTTCGCGASFSV.

Residues C41, C105, and C107 each contribute to the iron-sulfur cluster site.

Belongs to the HesB/IscA family. As to quaternary structure, homodimer. It depends on iron-sulfur cluster as a cofactor.

Functionally, required for insertion of 4Fe-4S clusters for at least IspG. This chain is Iron-sulfur cluster insertion protein ErpA, found in Vibrio cholerae serotype O1 (strain ATCC 39541 / Classical Ogawa 395 / O395).